A 410-amino-acid chain; its full sequence is Aspartate aminotransferase (410 aa).

L-aspartate is bound by residues Gly47, Trp135, and Asn185. Lys249 is subject to N6-(pyridoxal phosphate)lysine. Arg385 contacts L-aspartate.

This sequence belongs to the class-I pyridoxal-phosphate-dependent aminotransferase family. As to quaternary structure, homodimer. The cofactor is pyridoxal 5'-phosphate.

The protein localises to the cytoplasm. The catalysed reaction is L-aspartate + 2-oxoglutarate = oxaloacetate + L-glutamate. It carries out the reaction L-2-aminoadipate + 2-oxoglutarate = 2-oxoadipate + L-glutamate. Functionally, catalyzes the reversible conversion of aspartate and 2-oxoglutarate to glutamate and oxaloacetate. Genetic evidence shows that this protein is involved in L-lysine catabolism. It may have 2-aminoadipate:2-oxoglutarate aminotransferase activity. The sequence is that of Aspartate aminotransferase (aatB) from Rhizobium meliloti (strain 1021) (Ensifer meliloti).